Here is a 257-residue protein sequence, read N- to C-terminus: Imidazole glycerol phosphate synthase subunit HisF (257 aa).

Catalysis depends on residues Asp12 and Asp131.

This sequence belongs to the HisA/HisF family. Heterodimer of HisH and HisF.

It is found in the cytoplasm. It catalyses the reaction 5-[(5-phospho-1-deoxy-D-ribulos-1-ylimino)methylamino]-1-(5-phospho-beta-D-ribosyl)imidazole-4-carboxamide + L-glutamine = D-erythro-1-(imidazol-4-yl)glycerol 3-phosphate + 5-amino-1-(5-phospho-beta-D-ribosyl)imidazole-4-carboxamide + L-glutamate + H(+). It functions in the pathway amino-acid biosynthesis; L-histidine biosynthesis; L-histidine from 5-phospho-alpha-D-ribose 1-diphosphate: step 5/9. IGPS catalyzes the conversion of PRFAR and glutamine to IGP, AICAR and glutamate. The HisF subunit catalyzes the cyclization activity that produces IGP and AICAR from PRFAR using the ammonia provided by the HisH subunit. The sequence is that of Imidazole glycerol phosphate synthase subunit HisF from Cellvibrio japonicus (strain Ueda107) (Pseudomonas fluorescens subsp. cellulosa).